The sequence spans 360 residues: Hydroxycarboxylic acid receptor 2 (360 aa).

Residues 1 to 30 lie on the Extracellular side of the membrane; it reads MSKQNHFLVINGKNCCVFRDENIAKVLPPV. Residues 31-51 form a helical membrane-spanning segment; that stretch reads LGLEFVFGLLGNGLALWIFCF. The Cytoplasmic segment spans residues 52 to 60; sequence HLKSWKSSR. A helical transmembrane segment spans residues 61-81; that stretch reads IFLFNLAVADFLLIICLPFLT. Residues 82 to 98 are Extracellular-facing; it reads DNYVQNWDWRFGSIPCR. Cysteine 97 and cysteine 174 form a disulfide bridge. Residues 99 to 119 form a helical membrane-spanning segment; the sequence is VMLFMLAMNRQGSIIFLTVVA. The Cytoplasmic portion of the chain corresponds to 120–140; it reads VDRYFRVVHPHHFLNKISNRT. Residues 141–161 traverse the membrane as a helical segment; it reads AAIISCFLWGITIGLTVHLLY. Over 162 to 189 the chain is Extracellular; that stretch reads TDMMTRNGDANLCSSFSICYTFRWHDAM. The helical transmembrane segment at 190-210 threads the bilayer; sequence FLLEFFLPLGIILFCSGRIIW. Topologically, residues 211-226 are cytoplasmic; that stretch reads SLRQRQMDRHVKIKRA. Residues 227-247 traverse the membrane as a helical segment; it reads INFIMVVAIVFVICFLPSVAV. Residues 248-270 lie on the Extracellular side of the membrane; the sequence is RIRIFWLLYKHNVRNCDIYSSVD. The helical transmembrane segment at 271–291 threads the bilayer; the sequence is LAFFTTLSFTYMNSMLDPVVY. Topologically, residues 292–360 are cytoplasmic; that stretch reads YFSSPSFPNF…SPPYLASTSR (69 aa). Residues 320–360 form a disordered region; it reads NNRSTSVELTGDPSTIRSIPGALMTDPSEPGSPPYLASTSR. The span at 321–336 shows a compositional bias: polar residues; sequence NRSTSVELTGDPSTIR. The residue at position 325 (serine 325) is a Phosphoserine.

This sequence belongs to the G-protein coupled receptor 1 family. In terms of tissue distribution, expressed in adipose tissue, lung and spleen.

The protein resides in the cell membrane. Functionally, acts as a high affinity receptor for both nicotinic acid (also known as niacin) and (D)-beta-hydroxybutyrate and mediates increased adiponectin secretion and decreased lipolysis through G(i)-protein-mediated inhibition of adenylyl cyclase. This pharmacological effect requires nicotinic acid doses that are much higher than those provided by a normal diet. Mediates nicotinic acid-induced apoptosis in mature neutrophils. Receptor activation by nicotinic acid results in reduced cAMP levels which may affect activity of cAMP-dependent protein kinase A and phosphorylation of target proteins, leading to neutrophil apoptosis. The rank order of potency for the displacement of nicotinic acid binding is 5-methyl pyrazole-3-carboxylic acid = pyridine-3-acetic acid &gt; acifran &gt; 5-methyl nicotinic acid = acipimox &gt;&gt; nicotinuric acid = nicotinamide. This is Hydroxycarboxylic acid receptor 2 (Hcar2) from Rattus norvegicus (Rat).